The primary structure comprises 338 residues: Ketol-acid reductoisomerase (NADP(+)) (338 aa).

A KARI N-terminal Rossmann domain is found at 1–181; that stretch reads MKVFYDKDAD…GGGRAGIIET (181 aa). Residues 24 to 27, R47, and S52 contribute to the NADP(+) site; that span reads YGSQ. H107 is a catalytic residue. Residue G133 coordinates NADP(+). The 146-residue stretch at 182–327 folds into the KARI C-terminal knotted domain; it reads NFREETETDL…AKLRAMMPWI (146 aa). Residues D190, E194, E226, and E230 each coordinate Mg(2+). S251 is a substrate binding site.

It belongs to the ketol-acid reductoisomerase family. Requires Mg(2+) as cofactor.

It carries out the reaction (2R)-2,3-dihydroxy-3-methylbutanoate + NADP(+) = (2S)-2-acetolactate + NADPH + H(+). The enzyme catalyses (2R,3R)-2,3-dihydroxy-3-methylpentanoate + NADP(+) = (S)-2-ethyl-2-hydroxy-3-oxobutanoate + NADPH + H(+). Its pathway is amino-acid biosynthesis; L-isoleucine biosynthesis; L-isoleucine from 2-oxobutanoate: step 2/4. The protein operates within amino-acid biosynthesis; L-valine biosynthesis; L-valine from pyruvate: step 2/4. In terms of biological role, involved in the biosynthesis of branched-chain amino acids (BCAA). Catalyzes an alkyl-migration followed by a ketol-acid reduction of (S)-2-acetolactate (S2AL) to yield (R)-2,3-dihydroxy-isovalerate. In the isomerase reaction, S2AL is rearranged via a Mg-dependent methyl migration to produce 3-hydroxy-3-methyl-2-ketobutyrate (HMKB). In the reductase reaction, this 2-ketoacid undergoes a metal-dependent reduction by NADPH to yield (R)-2,3-dihydroxy-isovalerate. The sequence is that of Ketol-acid reductoisomerase (NADP(+)) from Polynucleobacter asymbioticus (strain DSM 18221 / CIP 109841 / QLW-P1DMWA-1) (Polynucleobacter necessarius subsp. asymbioticus).